A 611-amino-acid polypeptide reads, in one-letter code: MNKFIVVGAGHAGLEAAFILSKLNNKVYLCVLDRKYVANCPCNPSVGGPAKGIVTREIDALGGIQALAADSTALQRKILNSSKGPGVQCLRFQIDKVYYKKWFLEQIDNNENIELVEGEVTEVIKNGDTATGVMIDGVKKLEAGAVIITTGTYLKSLTFSGKDVKNEGPEGFKNSNNLSEWFKVNGFELIRLKTGTPPRIKKDSIDYSNLQIEPGNGTELYFSHWSKNKYIDYELPCYLIHTTEEIHKIINDNLHLSAMYSGNITGVGPRYCPSIEDKIVRFSNKPRHQIFLEPESLELDTVYLGGFSTSLDISVQDKIIRLLPGLKKAEVIKYGYAIEYDAINPIQLYPSLESKLIKNLFFAGQINGTSGYEEAAGQGLIAGINANQKIKNKEPLILSRDEAYIGVMIDDIVNKGVTDPYRLLTSRAEYRLLLRNDNVLDRLIQKGYEIGTISKEQIDLYNQNLEKKNKLIEFLKDKKVGMYTLLKAHTNNTNFSLYEFLKRPEIKLIELLKLIEFDYSNYDLELLKNIEITVKYEGYIKKESRIVNSLKNLESIKIPKDLIYDKVQNLSIEAIDKLNKIKPLNLAQAQRISGINLADIISLKTHLEQNA.

Residues 8–13, Val120, and Ser175 contribute to the FAD site; that span reads GAGHAG. An NAD(+)-binding site is contributed by 268-282; the sequence is GPRYCPSIEDKIVRF. An FAD-binding site is contributed by Gln365.

The protein belongs to the MnmG family. In terms of assembly, homodimer. Heterotetramer of two MnmE and two MnmG subunits. The cofactor is FAD.

The protein localises to the cytoplasm. Functionally, NAD-binding protein involved in the addition of a carboxymethylaminomethyl (cmnm) group at the wobble position (U34) of certain tRNAs, forming tRNA-cmnm(5)s(2)U34. In Mycoplasmoides gallisepticum (strain R(low / passage 15 / clone 2)) (Mycoplasma gallisepticum), this protein is tRNA uridine 5-carboxymethylaminomethyl modification enzyme MnmG.